The following is a 396-amino-acid chain: Dimethyladenosine transferase 2, mitochondrial (396 aa).

Residues 1–43 (MRGPAMRLPPRIALSALARGPSCILGSGAATRKDWQTRNRRGF) constitute a mitochondrion transit peptide. Residues 43-71 (FSDFNIEPLPDSDLEESSPWTSRNRSEPT) are disordered. Positions 74, 123, and 149 each coordinate S-adenosyl-L-methionine. Residues 328-329 (KR) form a DNA-binding region.

Belongs to the class I-like SAM-binding methyltransferase superfamily. rRNA adenine N(6)-methyltransferase family. KsgA subfamily. Homodimer. Component of the mitochondrial transcription initiation complex, composed at least of TFB2M, TFAM and POLRMT. In this complex TFAM recruits POLRMT to the promoter whereas TFB2M induces structural changes in POLRMT to enable promoter opening and trapping of the DNA non-template strand. Interacts with mitochondrial RNA polymerase POLRMT. Interacts with TFAM. As to expression, ubiquitously expressed.

The protein localises to the mitochondrion. The catalysed reaction is adenosine in rRNA + S-adenosyl-L-methionine = N(6)-methyladenosine in rRNA + S-adenosyl-L-homocysteine + H(+). Functionally, S-adenosyl-L-methionine-dependent rRNA methyltransferase which may methylate two specific adjacent adenosines in the loop of a conserved hairpin near the 3'-end of 12S mitochondrial rRNA. Component of the mitochondrial transcription initiation complex, composed at least of TFB2M, TFAM and POLRMT that is required for basal transcription of mitochondrial DNA. In this complex, TFAM recruits POLRMT to a specific promoter whereas TFB2M induces structural changes in POLRMT to enable promoter opening and trapping of the DNA non-template strand. Stimulates transcription independently of the methyltransferase activity. This chain is Dimethyladenosine transferase 2, mitochondrial, found in Mus musculus (Mouse).